Reading from the N-terminus, the 191-residue chain is MKKSLLGLTFASLMFSAGSAVAADYKIDKEGQHAFVNFRIQHLGYSWLYGTFKDFDGTFTFDEKNPAADKVNVTINTTSVDTNHAERDKHLRSADFLNTAKYPQATFTSTSVKKDGDDLDITGDLTLNGVTKPVTLEAKLIGQGDDPWGGKRAGFEAEGKIKLKDFNIKTDLGPASQEVDLIISVEGVQQK.

The N-terminal stretch at 1–22 (MKKSLLGLTFASLMFSAGSAVA) is a signal peptide.

It belongs to the UPF0312 family. Type 1 subfamily.

Its subcellular location is the periplasm. This chain is Protein YceI, found in Escherichia coli O17:K52:H18 (strain UMN026 / ExPEC).